We begin with the raw amino-acid sequence, 999 residues long: Translation initiation factor IF-2 (999 aa).

The disordered stretch occupies residues 50–407 (AFVNNTGSPA…RGQGQTVRLS (358 aa)). 2 stretches are compositionally biased toward pro residues: residues 60–89 (PAAP…PPGG) and 96–121 (PMPP…PPQS). The segment covering 136 to 162 (VAAAEARAAALKAEQEAAVKAAQAARQ) has biased composition (low complexity). Basic and acidic residues predominate over residues 163-173 (QQRDNVRREPP). The span at 179–194 (RPGPRPGPGAMPPRPG) shows a compositional bias: pro residues. Over residues 213-222 (GGRPPARGAG) the composition is skewed to low complexity. Pro residues predominate over residues 244–266 (RPSPASMPPRPSPASMPPRPSPA). Gly residues predominate over residues 275–367 (RPGGPGSGRP…GAAGAFGRPG (93 aa)). A compositionally biased stretch (basic residues) spans 371–380 (TRGRKSKKQR). Residues 388–405 (SAPTMSSGAPRGQGQTVR) are compositionally biased toward polar residues. The tr-type G domain maps to 490-662 (SRPPVVTVMG…VLLTADASLE (173 aa)). A G1 region spans residues 499–506 (GHVDHGKT). Residue 499-506 (GHVDHGKT) participates in GTP binding. Positions 524-528 (GITQH) are G2. Residues 549–552 (DTPG) form a G3 region. Residues 549 to 553 (DTPGH) and 603 to 606 (NKID) contribute to the GTP site. The tract at residues 603–606 (NKID) is G4. The interval 639 to 641 (AAK) is G5.

The protein belongs to the TRAFAC class translation factor GTPase superfamily. Classic translation factor GTPase family. IF-2 subfamily.

It localises to the cytoplasm. Its function is as follows. One of the essential components for the initiation of protein synthesis. Protects formylmethionyl-tRNA from spontaneous hydrolysis and promotes its binding to the 30S ribosomal subunits. Also involved in the hydrolysis of GTP during the formation of the 70S ribosomal complex. The chain is Translation initiation factor IF-2 from Salinispora tropica (strain ATCC BAA-916 / DSM 44818 / JCM 13857 / NBRC 105044 / CNB-440).